Reading from the N-terminus, the 415-residue chain is Histone acetyltransferase type B subunit 2 (415 aa).

WD repeat units lie at residues Glu-118–Ile-158, Pro-163–Leu-203, Thr-211–Ser-251, Pro-256–Ala-296, and Gly-307–Ala-347. The interaction with the histone H4 N-terminus stretch occupies residues Glu-349 to Asp-353. The WD 6 repeat unit spans residues Gly-364 to Glu-404.

This sequence belongs to the WD repeat RBAP46/RBAP48/MSI1 family. As to quaternary structure, component of the HAT-B complex composed of at least HAT1 and HAT2. The HAT-B complex binds to histone H4 tail.

The protein resides in the cytoplasm. Its subcellular location is the nucleus. Its function is as follows. Regulatory subunit of the histone acetylase B (HAT-B) complex. The complex acetylates 'Lys-12' of histone H4 which is required for telomeric silencing. The sequence is that of Histone acetyltransferase type B subunit 2 (HAT2) from Debaryomyces hansenii (strain ATCC 36239 / CBS 767 / BCRC 21394 / JCM 1990 / NBRC 0083 / IGC 2968) (Yeast).